Here is a 25-residue protein sequence, read N- to C-terminus: Omega-conotoxin CVIB (25 aa).

Intrachain disulfides connect Cys-1-Cys-16, Cys-8-Cys-20, and Cys-15-Cys-25. The residue at position 25 (Cys-25) is a Cysteine amide.

This sequence belongs to the conotoxin O1 superfamily. In terms of tissue distribution, expressed by the venom duct.

The protein localises to the secreted. Its function is as follows. Omega-conotoxins act at presynaptic membranes, they bind and block voltage-gated calcium channels (Cav). This toxin blocks N-, P- and Q-type calcium channels. It shows high activities on Cav2.1/CACNA1A (IC(50)=11 nM) and Cav2.2/CACNA1B (IC(50)=7.7 nM). In addition, it shows a higher potency when Cav2.2/CACNA1B is only expressed with the ancillary subunit CACNB3 (IC(50)=1.6 nM) than on Cav2.2/CACNA1B expressed with the ancillary subunits CACNA2D1 and CACNB3 (IC(50)=12 nM). Both the Cav2.2/CACNA1B block by this toxin and the recovery are voltage-independent. It is noteworthy that ancillary subunits beta do not modulate recovery from this toxin block, since Cav2.2/CACNA1B expressed with either the ancillary subunit CACNB2a (isoform 2a) or with CACNB3 exhibits moderate recovery. This is Omega-conotoxin CVIB from Conus catus (Cat cone).